Consider the following 188-residue polypeptide: MKIAQECRAGNVVMIDGSPWVVQKAEYNKSGRNAAVVKMKLKNLLSGINTETVYKADDKFEDILLDRKEVTYSYYADPMYVFMDGEYNQYEVTKEDLGDLLPWIEDGMEDVCDAVFYEGKVISVTAPTSIVREIAYTEPAVRGDTSGKVMKVAKLKNGTELSVAAFVEIGEKIIIDTRTGEYKSRAKD.

It belongs to the elongation factor P family.

The protein localises to the cytoplasm. The protein operates within protein biosynthesis; polypeptide chain elongation. Its function is as follows. Involved in peptide bond synthesis. Stimulates efficient translation and peptide-bond synthesis on native or reconstituted 70S ribosomes in vitro. Probably functions indirectly by altering the affinity of the ribosome for aminoacyl-tRNA, thus increasing their reactivity as acceptors for peptidyl transferase. The sequence is that of Elongation factor P from Cellvibrio japonicus (strain Ueda107) (Pseudomonas fluorescens subsp. cellulosa).